The primary structure comprises 384 residues: S-adenosylmethionine synthase (384 aa).

H15 lines the ATP pocket. Residue D17 coordinates Mg(2+). Residue E43 coordinates K(+). Residues E56 and Q99 each contribute to the L-methionine site. Residues 99–109 form a flexible loop region; sequence QSPDINQGVDR. ATP contacts are provided by residues 164–166, 230–231, D239, 245–246, A262, and K266; these read DAK, RF, and RK. D239 lines the L-methionine pocket. Residue K270 participates in L-methionine binding.

This sequence belongs to the AdoMet synthase family. In terms of assembly, homotetramer; dimer of dimers. Requires Mg(2+) as cofactor. K(+) serves as cofactor.

The protein resides in the cytoplasm. The enzyme catalyses L-methionine + ATP + H2O = S-adenosyl-L-methionine + phosphate + diphosphate. The protein operates within amino-acid biosynthesis; S-adenosyl-L-methionine biosynthesis; S-adenosyl-L-methionine from L-methionine: step 1/1. Functionally, catalyzes the formation of S-adenosylmethionine (AdoMet) from methionine and ATP. The overall synthetic reaction is composed of two sequential steps, AdoMet formation and the subsequent tripolyphosphate hydrolysis which occurs prior to release of AdoMet from the enzyme. This is S-adenosylmethionine synthase from Cronobacter sakazakii (strain ATCC BAA-894) (Enterobacter sakazakii).